The following is a 438-amino-acid chain: GDP-mannose 6-dehydrogenase (438 aa).

NAD(+)-binding residues include Tyr-10, Val-11, Asp-30, Lys-35, Thr-86, and Thr-124. GDP-alpha-D-mannuronate contacts are provided by Glu-161, Lys-210, Asn-214, His-217, Asn-225, Tyr-256, Tyr-257, Arg-259, Phe-262, and Gly-265. The active site involves Cys-268. An NAD(+)-binding site is contributed by Lys-271. A GDP-alpha-D-mannuronate-binding site is contributed by Lys-324. Arg-331 lines the NAD(+) pocket.

Belongs to the UDP-glucose/GDP-mannose dehydrogenase family.

The catalysed reaction is GDP-alpha-D-mannose + 2 NAD(+) + H2O = GDP-alpha-D-mannuronate + 2 NADH + 3 H(+). It participates in glycan biosynthesis; alginate biosynthesis. Functionally, catalyzes the oxidation of guanosine diphospho-D-mannose (GDP-D-mannose) to GDP-D-mannuronic acid, a precursor for alginate polymerization. The alginate layer causes a mucoid phenotype and provides a protective barrier against host immune defenses and antibiotics. This is GDP-mannose 6-dehydrogenase (algD) from Pseudomonas putida (strain ATCC 47054 / DSM 6125 / CFBP 8728 / NCIMB 11950 / KT2440).